Here is a 381-residue protein sequence, read N- to C-terminus: 1-deoxy-D-xylulose 5-phosphate reductoisomerase (381 aa).

Gly13, Ser14, Ile15, Asn40, and Asn114 together coordinate NADPH. Lys115 contacts 1-deoxy-D-xylulose 5-phosphate. Glu116 is an NADPH binding site. Position 140 (Asp140) interacts with Mn(2+). 1-deoxy-D-xylulose 5-phosphate-binding residues include Ser141, Glu142, Ser166, and His189. Glu142 contacts Mn(2+). Residue Gly195 coordinates NADPH. Ser202, Asn207, Lys208, and Glu211 together coordinate 1-deoxy-D-xylulose 5-phosphate. A Mn(2+)-binding site is contributed by Glu211.

The protein belongs to the DXR family. It depends on Mg(2+) as a cofactor. The cofactor is Mn(2+).

The enzyme catalyses 2-C-methyl-D-erythritol 4-phosphate + NADP(+) = 1-deoxy-D-xylulose 5-phosphate + NADPH + H(+). Its pathway is isoprenoid biosynthesis; isopentenyl diphosphate biosynthesis via DXP pathway; isopentenyl diphosphate from 1-deoxy-D-xylulose 5-phosphate: step 1/6. Its function is as follows. Catalyzes the NADPH-dependent rearrangement and reduction of 1-deoxy-D-xylulose-5-phosphate (DXP) to 2-C-methyl-D-erythritol 4-phosphate (MEP). The chain is 1-deoxy-D-xylulose 5-phosphate reductoisomerase from Treponema denticola (strain ATCC 35405 / DSM 14222 / CIP 103919 / JCM 8153 / KCTC 15104).